A 136-amino-acid polypeptide reads, in one-letter code: Large ribosomal subunit protein bL12 (136 aa).

This sequence belongs to the bacterial ribosomal protein bL12 family. In terms of assembly, homodimer. Part of the ribosomal stalk of the 50S ribosomal subunit. Forms a multimeric L10(L12)X complex, where L10 forms an elongated spine to which 2 to 4 L12 dimers bind in a sequential fashion. Binds GTP-bound translation factors.

Functionally, forms part of the ribosomal stalk which helps the ribosome interact with GTP-bound translation factors. Is thus essential for accurate translation. The polypeptide is Large ribosomal subunit protein bL12 (Synechococcus sp. (strain JA-2-3B'a(2-13)) (Cyanobacteria bacterium Yellowstone B-Prime)).